A 139-amino-acid chain; its full sequence is Ribulose bisphosphate carboxylase small subunit (139 aa).

This sequence belongs to the RuBisCO small chain family. In terms of assembly, heterohexadecamer of 8 large and 8 small subunits.

The protein localises to the plastid. It localises to the chloroplast. Functionally, ruBisCO catalyzes two reactions: the carboxylation of D-ribulose 1,5-bisphosphate, the primary event in carbon dioxide fixation, as well as the oxidative fragmentation of the pentose substrate in the photorespiration process. Both reactions occur simultaneously and in competition at the same active site. Although the small subunit is not catalytic it is essential for maximal activity. The protein is Ribulose bisphosphate carboxylase small subunit of Guillardia theta (Cryptophyte).